Here is a 499-residue protein sequence, read N- to C-terminus: uncharacterized protein (499 aa).

11 helical membrane-spanning segments follow: residues Phe-5 to Val-25, Leu-79 to Leu-99, Ala-110 to Ala-130, Pro-132 to Thr-152, Val-170 to Leu-190, Tyr-203 to Val-223, Ala-252 to Trp-272, Val-286 to Ile-306, Leu-332 to Phe-352, Phe-354 to Tyr-374, and Leu-377 to Val-397.

The protein belongs to the glycosyltransferase 39 family.

Its subcellular location is the cell membrane. This is an uncharacterized protein from Aquifex aeolicus (strain VF5).